The primary structure comprises 85 residues: Alpha-conotoxin Lt28.1 (85 aa).

Positions 1–21 (MPKLEMMLLVLLILPLCYIDA) are cleaved as a signal peptide. Positions 22–40 (VGPPPPWNMEDEIIEHWQK) are excised as a propeptide. Disulfide bonds link Cys61–Cys74, Cys66–Cys84, Cys67–Cys79, and Cys72–Cys81.

The protein belongs to the conotoxin D superfamily. As to expression, expressed by the venom duct.

Its subcellular location is the secreted. Functionally, alpha-conotoxins act on postsynaptic membranes, they bind to the nicotinic acetylcholine receptors (nAChR) and thus inhibit them. This toxin weakly inhibits alpha-9-alpha-10/CHRNA9-CHRNA10 nAChRs (IC(50)=3 uM). The chain is Alpha-conotoxin Lt28.1 from Conus litteratus (Lettered cone).